The primary structure comprises 224 residues: Flagellar L-ring protein (224 aa).

Positions 1-15 are cleaved as a signal peptide; it reads MARYFILAAALLLTA. A lipid anchor (N-palmitoyl cysteine) is attached at C16. C16 carries S-diacylglycerol cysteine lipidation.

It belongs to the FlgH family. As to quaternary structure, the basal body constitutes a major portion of the flagellar organelle and consists of four rings (L,P,S, and M) mounted on a central rod.

It localises to the cell outer membrane. Its subcellular location is the bacterial flagellum basal body. Assembles around the rod to form the L-ring and probably protects the motor/basal body from shearing forces during rotation. The chain is Flagellar L-ring protein from Shewanella sp. (strain MR-4).